The primary structure comprises 163 residues: Superoxide dismutase [Mn] (163 aa).

4 residues coordinate Mn(2+): H2, H50, D134, and H138.

This sequence belongs to the iron/manganese superoxide dismutase family. Mn(2+) serves as cofactor.

The catalysed reaction is 2 superoxide + 2 H(+) = H2O2 + O2. Destroys superoxide anion radicals which are normally produced within the cells and which are toxic to biological systems. This chain is Superoxide dismutase [Mn] (sodA), found in Mycobacterium kansasii.